The primary structure comprises 170 residues: RxLR effector protein CRE16 (170 aa).

Residues M1–A23 form the signal peptide. Residues R47–R68 carry the RxLR-dEER motif.

It belongs to the RxLR effector family.

The protein resides in the secreted. Its subcellular location is the host cytoplasm. The protein localises to the host nucleus. In terms of biological role, effector that is involved in host plant infection. Contributes to virulence during the early infection stage, by inhibiting plant defense responses induced by both PAMP-triggered immunity (PTI) and effector-triggered immunity (ETI). This is RxLR effector protein CRE16 from Phytophthora infestans (strain T30-4) (Potato late blight agent).